Consider the following 307-residue polypeptide: Cuticle collagen 36 (307 aa).

Disordered regions lie at residues 76–102 (TRSR…GGPT) and 116–307 (QQGP…PPGY). The segment covering 86-102 (EGSGSGGSGSGGYGGPT) has biased composition (gly residues). 6 triple-helical region regions span residues 89 to 105 (GSGG…TGAG), 118 to 150 (GPAG…EGSI), 167 to 187 (GPQG…KGKS), 194 to 226 (GKNG…PGRV), 231 to 257 (GAAG…AGLT), and 260 to 295 (GGQG…EGSC). The span at 157 to 168 (PSEPCIICPPGP) shows a compositional bias: pro residues. The span at 186-196 (KSQERAADGKN) shows a compositional bias: basic and acidic residues. Over residues 202–220 (IGPPGPPGGVGEPGPPGPA) the composition is skewed to pro residues. Over residues 231–242 (GAAGPAGPRGVK) the composition is skewed to low complexity. Over residues 258-278 (EIGGQGPPGDAGGPGPVGGQG) the composition is skewed to gly residues. Over residues 279–288 (PPGPQGPQGP) the composition is skewed to pro residues.

It belongs to the cuticular collagen family. Collagen polypeptide chains are complexed within the cuticle by disulfide bonds and other types of covalent cross-links.

Functionally, nematode cuticles are composed largely of collagen-like proteins. The cuticle functions both as an exoskeleton and as a barrier to protect the worm from its environment. The chain is Cuticle collagen 36 (col-36) from Caenorhabditis elegans.